The primary structure comprises 400 residues: Lysophospholipid transporter LplT (400 aa).

Transmembrane regions (helical) follow at residues 19–39 (VIVA…ATLA), 53–73 (VLQM…GQIA), 91–111 (AGAA…LVGI), 139–159 (LMEA…GVLA), 164–184 (IAAL…NLFI), 195–213 (SWRL…VVLW), 227–247 (LFWG…PVAL), 257–277 (YLNA…AKLV), 281–301 (TVSR…IFSL), 304–324 (ALLP…FFVV), 352–372 (NSAM…GVPA), and 373–393 (VAIG…LWIW).

This sequence belongs to the major facilitator superfamily. LplT (TC 2.A.1.42) family.

It is found in the cell inner membrane. In terms of biological role, catalyzes the facilitated diffusion of 2-acyl-glycero-3-phosphoethanolamine (2-acyl-GPE) into the cell. The sequence is that of Lysophospholipid transporter LplT from Salmonella newport (strain SL254).